Consider the following 1038-residue polypeptide: Bone morphogenetic protein receptor type-2 (1038 aa).

The first 26 residues, 1–26 (MTSSLHRPFRVPWLLWAVLLVSTTAA), serve as a signal peptide directing secretion. Topologically, residues 27-150 (SQNQERLCAF…PPHSFNRDET (124 aa)) are extracellular. Cystine bridges form between cysteine 34–cysteine 66, cysteine 60–cysteine 84, cysteine 94–cysteine 117, cysteine 99–cysteine 116, and cysteine 118–cysteine 123. Asparagine 55 carries an N-linked (GlcNAc...) asparagine glycan. Asparagine 110 carries N-linked (GlcNAc...) asparagine glycosylation. N-linked (GlcNAc...) asparagine glycosylation is present at asparagine 126. The chain crosses the membrane as a helical span at residues 151-171 (IIIALASVSVLAVLIVALCFG). Residues 172 to 1038 (YRMLTGDRKQ…VSKDIGMNCL (867 aa)) are Cytoplasmic-facing. Residues 203–504 (LKLLELIGRG…QCAEERMAEL (302 aa)) form the Protein kinase domain. Residues 209-217 (IGRGRYGAV), lysine 230, and 280-282 (EYY) contribute to the ATP site. The Proton acceptor role is filled by aspartate 333. ATP-binding positions include 337-338 (RN) and aspartate 351. Residue threonine 379 is modified to Phosphothreonine. A Phosphoserine modification is found at serine 586. The tract at residues 593–626 (QAQARIPSPETSVTSLSTNTTTTNTTGLTPSTGM) is disordered. Positions 603–626 (TSVTSLSTNTTTTNTTGLTPSTGM) are enriched in low complexity. Serine 680 and serine 681 each carry phosphoserine. The disordered stretch occupies residues 746 to 769 (PKQQNLPKRPTSLPLNTKNSTKEP). Serine 843 bears the Phosphoserine mark. Residues 872–896 (RREQQAGHDEGVLDRLVDRRERPLE) are compositionally biased toward basic and acidic residues. The tract at residues 872-974 (RREQQAGHDE…SGSGEKIKRR (103 aa)) is disordered. 2 stretches are compositionally biased toward polar residues: residues 909-924 (PCSEQDILTQGVTSTA) and 937-964 (RPNSLDLSATNILDGSSIQIGESTQDGK).

Belongs to the protein kinase superfamily. TKL Ser/Thr protein kinase family. TGFB receptor subfamily. As to quaternary structure, interacts with GDF5. Interacts with BMP4. Interacts with SCUBE3. Interacts with TSC22D1/TSC-22. Interacts with activin A/INHBA. The cofactor is Mg(2+). Mn(2+) serves as cofactor.

The protein resides in the cell membrane. The catalysed reaction is L-threonyl-[receptor-protein] + ATP = O-phospho-L-threonyl-[receptor-protein] + ADP + H(+). The enzyme catalyses L-seryl-[receptor-protein] + ATP = O-phospho-L-seryl-[receptor-protein] + ADP + H(+). On ligand binding, forms a receptor complex consisting of two type II and two type I transmembrane serine/threonine kinases. Type II receptors phosphorylate and activate type I receptors which autophosphorylate, then bind and activate SMAD transcriptional regulators. Can also mediate signaling through the activation of the p38MAPK cascade. Binds to BMP7, BMP2 and, less efficiently, BMP4. Binding is weak but enhanced by the presence of type I receptors for BMPs. Mediates induction of adipogenesis by GDF6. Promotes signaling also by binding to activin A/INHBA. This is Bone morphogenetic protein receptor type-2 (Bmpr2) from Mus musculus (Mouse).